We begin with the raw amino-acid sequence, 233 residues long: Large ribosomal subunit protein uL1 (233 aa).

It belongs to the universal ribosomal protein uL1 family. In terms of assembly, part of the 50S ribosomal subunit.

Functionally, binds directly to 23S rRNA. The L1 stalk is quite mobile in the ribosome, and is involved in E site tRNA release. Protein L1 is also a translational repressor protein, it controls the translation of the L11 operon by binding to its mRNA. The polypeptide is Large ribosomal subunit protein uL1 (Aeromonas salmonicida (strain A449)).